The following is a 494-amino-acid chain: 3-octaprenyl-4-hydroxybenzoate carboxy-lyase (494 aa).

Position 172 (Asn172) interacts with Mn(2+). Prenylated FMN-binding positions include 175-177 (IYR), 189-191 (RWL), and 194-195 (RG). Glu238 is a Mn(2+) binding site. Asp287 acts as the Proton donor in catalysis.

The protein belongs to the UbiD family. Homohexamer. It depends on prenylated FMN as a cofactor. Requires Mn(2+) as cofactor.

The protein resides in the cell membrane. The catalysed reaction is a 4-hydroxy-3-(all-trans-polyprenyl)benzoate + H(+) = a 2-(all-trans-polyprenyl)phenol + CO2. Its pathway is cofactor biosynthesis; ubiquinone biosynthesis. Functionally, catalyzes the decarboxylation of 3-octaprenyl-4-hydroxy benzoate to 2-octaprenylphenol, an intermediate step in ubiquinone biosynthesis. The polypeptide is 3-octaprenyl-4-hydroxybenzoate carboxy-lyase (Citrobacter koseri (strain ATCC BAA-895 / CDC 4225-83 / SGSC4696)).